A 154-amino-acid polypeptide reads, in one-letter code: 3-hydroxyacyl-[acyl-carrier-protein] dehydratase FabZ (154 aa).

His57 is a catalytic residue.

The protein belongs to the thioester dehydratase family. FabZ subfamily.

Its subcellular location is the cytoplasm. The enzyme catalyses a (3R)-hydroxyacyl-[ACP] = a (2E)-enoyl-[ACP] + H2O. Involved in unsaturated fatty acids biosynthesis. Catalyzes the dehydration of short chain beta-hydroxyacyl-ACPs and long chain saturated and unsaturated beta-hydroxyacyl-ACPs. This chain is 3-hydroxyacyl-[acyl-carrier-protein] dehydratase FabZ, found in Allorhizobium ampelinum (strain ATCC BAA-846 / DSM 112012 / S4) (Agrobacterium vitis (strain S4)).